A 110-amino-acid chain; its full sequence is UPF0060 membrane protein Pcryo_1341 (110 aa).

4 consecutive transmembrane segments (helical) span residues 7 to 27 (VGLF…PYLW), 33 to 53 (SIWL…LLTL), 63 to 83 (AAYG…VDGI), and 87 to 107 (TWDI…MFAP).

The protein belongs to the UPF0060 family.

The protein resides in the cell inner membrane. The chain is UPF0060 membrane protein Pcryo_1341 from Psychrobacter cryohalolentis (strain ATCC BAA-1226 / DSM 17306 / VKM B-2378 / K5).